The primary structure comprises 85 residues: Small ribosomal subunit protein bS16 (85 aa).

This sequence belongs to the bacterial ribosomal protein bS16 family.

This Xanthomonas euvesicatoria pv. vesicatoria (strain 85-10) (Xanthomonas campestris pv. vesicatoria) protein is Small ribosomal subunit protein bS16.